The chain runs to 353 residues: S-adenosylmethionine:tRNA ribosyltransferase-isomerase (353 aa).

It belongs to the QueA family. Monomer.

It localises to the cytoplasm. It catalyses the reaction 7-aminomethyl-7-carbaguanosine(34) in tRNA + S-adenosyl-L-methionine = epoxyqueuosine(34) in tRNA + adenine + L-methionine + 2 H(+). Its pathway is tRNA modification; tRNA-queuosine biosynthesis. In terms of biological role, transfers and isomerizes the ribose moiety from AdoMet to the 7-aminomethyl group of 7-deazaguanine (preQ1-tRNA) to give epoxyqueuosine (oQ-tRNA). This Cupriavidus metallidurans (strain ATCC 43123 / DSM 2839 / NBRC 102507 / CH34) (Ralstonia metallidurans) protein is S-adenosylmethionine:tRNA ribosyltransferase-isomerase.